Here is a 305-residue protein sequence, read N- to C-terminus: Divergent heme oxygenase-like protein (305 aa).

The signal sequence occupies residues 1–18; sequence MIRKIIILMFTFFSNIHN. Residues 1-83 are sufficient for apicoplast targeting; it reads MIRKIIILMF…GVDKNNINYN (83 aa). Asparagine 132, asparagine 159, and asparagine 288 each carry an N-linked (GlcNAc...) asparagine glycan.

Post-translationally, proteolytically cleaved; targeted by its N-terminal leader sequence for import into the apicoplast where it undergoes proteolytic processing, resulting in an N-terminus starting at or near Gly-33 in the mature protein.

It is found in the plastid. The protein resides in the apicoplast. Essential for blood-stage parasite viability. Required for apicoplast biogenesis. Associates with the apicoplast genome and mediates apicoplast gene expression. Can bind heme. Can bind protoporphyrin IX. The chain is Divergent heme oxygenase-like protein from Plasmodium falciparum (isolate 3D7).